Here is a 174-residue protein sequence, read N- to C-terminus: Protein RESISTANCE TO POWDERY MILDEW 8.2 (174 aa).

Positions 1-153 (MIAEVAAGGA…IMPQPKFEIH (153 aa)) constitute an RPW8 domain. A helical membrane pass occupies residues 7–23 (AGGALGLALSVLHEAVK). Residues 68–145 (VNKRLKLLLE…EISTKLDKIM (78 aa)) adopt a coiled-coil conformation.

This sequence belongs to the plant RPW8 protein family.

It is found in the membrane. Disease resistance (R) protein that induces localized, salicylic acid-dependent defenses. Confers resistance to powdery mildew (e.g. Erysiphe cichoracearum UCSC1). This is Protein RESISTANCE TO POWDERY MILDEW 8.2 from Arabidopsis thaliana (Mouse-ear cress).